Here is a 1168-residue protein sequence, read N- to C-terminus: Carboxylic acid reductase (1168 aa).

AMP contacts are provided by residues His290, Ser385, 407–408 (EG), Thr412, Asp485, 497–500 (YLDR), Lys506, and Lys606. The Carrier domain maps to 645-720 (APVLPTLCRA…ALADHIEAAR (76 aa)). At Ser679 the chain carries O-(pantetheine 4'-phosphoryl)serine. Residues 777–780 (TGFL), Arg804, Arg814, 844–845 (DK), 870–872 (PAA), Ser910, Tyr946, and Lys950 contribute to the NADP(+) site.

This sequence belongs to the ATP-dependent AMP-binding enzyme family. Carboxylic acid reductase subfamily. It depends on pantetheine 4'-phosphate as a cofactor.

The enzyme catalyses a carboxylate + ATP + NADPH + H(+) = an aldehyde + AMP + diphosphate + NADP(+). It catalyses the reaction a medium-chain fatty acid + ATP + H(+) = a medium-chain fatty acyl-AMP + diphosphate. The catalysed reaction is a long-chain fatty acid + ATP + H(+) = a long-chain fatty acyl-AMP + diphosphate. It carries out the reaction dodecanoate + ATP + H(+) = dodecanoyl-AMP + diphosphate. The enzyme catalyses hexadecanoate + ATP + H(+) = hexadecanoyl-AMP + diphosphate. In terms of biological role, catalyzes the ATP- and NADPH-dependent reduction of carboxylic acids to the corresponding aldehydes. In vitro, also catalyzes the activation of medium/long-chain fatty acids as acyl-adenylates (acyl-AMP). This chain is Carboxylic acid reductase, found in Mycobacterium tuberculosis (strain ATCC 25618 / H37Rv).